We begin with the raw amino-acid sequence, 32 residues long: U21-ctenitoxin-Co1a (32 aa).

Cystine bridges form between Cys3–Cys17, Cys10–Cys21, and Cys16–Cys30.

In terms of tissue distribution, expressed by the venom gland.

The protein resides in the secreted. Its function is as follows. Not toxic to mice by intracerebroventricular injection. The protein is U21-ctenitoxin-Co1a of Ctenus ornatus (Brazilian spider).